We begin with the raw amino-acid sequence, 347 residues long: UPF0283 membrane protein ECA1987 (347 aa).

A compositionally biased stretch (basic and acidic residues) spans 1 to 11; it reads MNEPLKPRVTF. The segment at 1–48 is disordered; sequence MNEPLKPRVTFDDVSPQEPQPQLRAGLAFDEQSSTPFSPISREEEVPE. 3 helical membrane passes run 70–90, 99–119, and 213–233; these read MVMAGVALFGISALAQGVQSL, WIALGGITAGSLIVAAGVGSL, and ESTLMIAVSPLALVDMAFIAW.

The protein belongs to the UPF0283 family.

Its subcellular location is the cell inner membrane. In Pectobacterium atrosepticum (strain SCRI 1043 / ATCC BAA-672) (Erwinia carotovora subsp. atroseptica), this protein is UPF0283 membrane protein ECA1987.